A 339-amino-acid polypeptide reads, in one-letter code: Phytoene synthase (339 aa).

The protein belongs to the phytoene/squalene synthase family. It depends on ATP as a cofactor. The cofactor is Mn(2+). Requires Mg(2+) as cofactor.

Its pathway is carotenoid biosynthesis; phytoene biosynthesis. Its function is as follows. Involved in the biosynthesis of carotenoids. Catalyzes the condensation of two molecules of geranylgeranyl diphosphate (GGPP) to give prephytoene diphosphate (PPPP) and the subsequent rearrangement of the cyclopropylcarbinyl intermediate to yield phytoene. This Rhodobacter capsulatus (strain ATCC BAA-309 / NBRC 16581 / SB1003) protein is Phytoene synthase (crtB).